Here is a 348-residue protein sequence, read N- to C-terminus: Rhodopsin (348 aa).

Met1 bears the N-acetylmethionine mark. At 1–36 (MNGTEGPNFYVPFSNKTGVVRSPFEYPQYYLAEPWQ) the chain is on the extracellular side. Asn2 and Asn15 each carry an N-linked (GlcNAc...) asparagine glycan. Residues 37–61 (FSMLAAYMFLLIVLGFPINFLTLYV) form a helical membrane-spanning segment. Topologically, residues 62-73 (TVQHKKLRTPLN) are cytoplasmic. Residues 74–96 (YILLNLAVADLFMVFGGFTTTLY) traverse the membrane as a helical segment. At 97 to 110 (TSLHGYFVFGPTGC) the chain is on the extracellular side. Cys110 and Cys187 are disulfide-bonded. A helical membrane pass occupies residues 111–133 (NLEGFFATLGGEIALWSLVVLAI). Residues 134–136 (ERY) carry the 'Ionic lock' involved in activated form stabilization motif. Residues 134-152 (ERYVVVCKPMSNFRFGENH) lie on the Cytoplasmic side of the membrane. The chain crosses the membrane as a helical span at residues 153–173 (AIMGVAFTWVMALACAAPPLV). Over 174–202 (GWSRYIPEGMQCSCGIDYYTLKPEVNNES) the chain is Extracellular. Position 201 (Glu201) interacts with Zn(2+). Residues 203–224 (FVIYMFVVHFTIPMIVIFFCYG) traverse the membrane as a helical segment. Topologically, residues 225–252 (QLVFTVKEAAAQQQESATTQKAEKEVTR) are cytoplasmic. A helical transmembrane segment spans residues 253–274 (MVIIMVIAFLICWVPYASVAFY). At 275-286 (IFTHQGSNFGPI) the chain is on the extracellular side. Gln279 provides a ligand contact to Zn(2+). Residues 287 to 308 (FMTLPAFFAKSSSIYNPVIYIM) form a helical membrane-spanning segment. Lys296 bears the N6-(retinylidene)lysine mark. The Cytoplasmic segment spans residues 309 to 348 (MNKQFRNCMLTTLCCGKNPLGDDEASTTGSKTETSQVAPA). S-palmitoyl cysteine attachment occurs at residues Cys322 and Cys323. The interval 330–348 (DDEASTTGSKTETSQVAPA) is interaction with SAG. Residue Ser334 is modified to Phosphoserine. 2 positions are modified to phosphothreonine: Thr335 and Thr336. Ser338 is subject to Phosphoserine. Thr340 and Thr342 each carry phosphothreonine. Ser343 carries the post-translational modification Phosphoserine.

It belongs to the G-protein coupled receptor 1 family. Opsin subfamily. As to quaternary structure, homodimer. May form a complex composed of RHO, GRK1 and RCVRN in a Ca(2+)-dependent manner; RCVRN prevents the interaction between GRK1 and RHO. Interacts with GRK1. Interacts (phosphorylated form) with SAG. Interacts with GNAT1. Interacts with GNAT3. SAG and G-proteins compete for a common binding site. Interacts with PRCD; the interaction promotes PRCD stability. Forms a complex with ASAP1 and ARF4. Forms a complex with ASAP1, RAB11A, Rabin8/RAB3IP, ARF4 and RAB11FIP3; the complex regulates Golgi-to-cilia rhodopsin/RHO transport in photoreceptors. Post-translationally, phosphorylated on some or all of the serine and threonine residues present in the C-terminal region. Contains one covalently linked retinal chromophore. Upon light absorption, the covalently bound 11-cis-retinal is converted to all-trans-retinal. After hydrolysis of the Schiff base and release of the covalently bound all-trans-retinal, active rhodopsin is regenerated by binding of a fresh molecule of 11-cis-retinal.

The protein localises to the membrane. It localises to the cell projection. It is found in the cilium. Its subcellular location is the photoreceptor outer segment. Photoreceptor required for image-forming vision at low light intensity. Required for photoreceptor cell viability after birth. Light-induced isomerization of 11-cis to all-trans retinal triggers a conformational change that activates signaling via G-proteins. Subsequent receptor phosphorylation mediates displacement of the bound G-protein alpha subunit by the arrestin SAG and terminates signaling. This Felis catus (Cat) protein is Rhodopsin (RHO).